The sequence spans 250 residues: UDP-2,3-diacylglucosamine hydrolase (250 aa).

Mn(2+) contacts are provided by Asp8, His10, Asp41, Asn79, and His115. Residue Asn79–His80 coordinates substrate. Residues Asp123, Thr165, Lys168, and His196 each contribute to the substrate site. Mn(2+)-binding residues include His196 and His198.

The protein belongs to the LpxH family. It depends on Mn(2+) as a cofactor.

The protein localises to the cell inner membrane. The catalysed reaction is UDP-2-N,3-O-bis[(3R)-3-hydroxytetradecanoyl]-alpha-D-glucosamine + H2O = 2-N,3-O-bis[(3R)-3-hydroxytetradecanoyl]-alpha-D-glucosaminyl 1-phosphate + UMP + 2 H(+). The protein operates within glycolipid biosynthesis; lipid IV(A) biosynthesis; lipid IV(A) from (3R)-3-hydroxytetradecanoyl-[acyl-carrier-protein] and UDP-N-acetyl-alpha-D-glucosamine: step 4/6. Functionally, hydrolyzes the pyrophosphate bond of UDP-2,3-diacylglucosamine to yield 2,3-diacylglucosamine 1-phosphate (lipid X) and UMP by catalyzing the attack of water at the alpha-P atom. Involved in the biosynthesis of lipid A, a phosphorylated glycolipid that anchors the lipopolysaccharide to the outer membrane of the cell. The polypeptide is UDP-2,3-diacylglucosamine hydrolase (Blochmanniella pennsylvanica (strain BPEN)).